The following is a 191-amino-acid chain: dCTP deaminase (191 aa).

DCTP-binding positions include 112-117 (KSTYAR), 136-138 (TLE), Gln157, Tyr173, and Gln183. Residue Glu138 is the Proton donor/acceptor of the active site.

Belongs to the dCTP deaminase family. In terms of assembly, homotrimer.

It catalyses the reaction dCTP + H2O + H(+) = dUTP + NH4(+). It functions in the pathway pyrimidine metabolism; dUMP biosynthesis; dUMP from dCTP (dUTP route): step 1/2. Functionally, catalyzes the deamination of dCTP to dUTP. This chain is dCTP deaminase, found in Xylella fastidiosa (strain 9a5c).